The sequence spans 465 residues: tRNA modification GTPase MnmE (465 aa).

Residues Arg-23, Glu-81, and Lys-120 each contribute to the (6S)-5-formyl-5,6,7,8-tetrahydrofolate site. Residues 217 to 389 (GVHVVLAGRP…LIASLCDKVG (173 aa)) enclose the TrmE-type G domain. K(+) is bound at residue Asn-227. GTP-binding positions include 227-232 (NAGKSS), 246-252 (TDVAGTT), and 271-274 (DTAG). Residue Ser-231 coordinates Mg(2+). Residues Thr-246, Val-248, and Thr-251 each contribute to the K(+) site. Residue Thr-252 coordinates Mg(2+). Position 465 (Lys-465) interacts with (6S)-5-formyl-5,6,7,8-tetrahydrofolate.

It belongs to the TRAFAC class TrmE-Era-EngA-EngB-Septin-like GTPase superfamily. TrmE GTPase family. In terms of assembly, homodimer. Heterotetramer of two MnmE and two MnmG subunits. Requires K(+) as cofactor.

It is found in the cytoplasm. Exhibits a very high intrinsic GTPase hydrolysis rate. Involved in the addition of a carboxymethylaminomethyl (cmnm) group at the wobble position (U34) of certain tRNAs, forming tRNA-cmnm(5)s(2)U34. The chain is tRNA modification GTPase MnmE from Psychrobacter sp. (strain PRwf-1).